The following is a 787-amino-acid chain: Zinc finger protein 227 (787 aa).

The KRAB domain maps to 23-94 (VTFKDVAVVF…ERETQRNGHS (72 aa)). C2H2-type zinc fingers lie at residues 243–275 (HPCR…LQTH), 312–334 (YRCD…YRTH), 340–362 (YRCE…QRVH), 368–390 (YKCE…QRVH), 396–418 (YKCE…QRVH), 424–446 (YKCD…RRVH), 452–474 (YRCE…FRVH), 480–502 (YTCK…QNVH), 508–530 (FKCE…QRVH), 536–558 (YRCD…QVIH), 564–586 (YTCE…QRVH), 592–614 (YKCE…QRVH), 620–642 (YKCG…QRVH), 648–670 (YKCD…QRGH), 676–698 (YKCE…QRVH), 704–726 (HKCE…LSVH), 732–754 (FKCE…QRVH), and 760–782 (YKCN…QKVH).

This sequence belongs to the krueppel C2H2-type zinc-finger protein family.

It is found in the nucleus. May be involved in transcriptional regulation. This Bos taurus (Bovine) protein is Zinc finger protein 227 (ZNF227).